Here is a 557-residue protein sequence, read N- to C-terminus: uncharacterized protein (557 aa).

The signal sequence occupies residues 1–30; sequence MAPRRRRHTRIAGLRVVGTATLVAATTLTA. Residue C31 is the site of N-palmitoyl cysteine attachment. Residue C31 is the site of S-diacylglycerol cysteine attachment.

This sequence to M.bovis Mb2616c and M.leprae ML0489.

The protein resides in the cell membrane. This is an uncharacterized protein from Mycobacterium tuberculosis (strain CDC 1551 / Oshkosh).